A 322-amino-acid chain; its full sequence is Malate dehydrogenase 1 (322 aa).

Residues 10 to 15 and Asp34 each bind NAD(+); that span reads GSGQIG. Residues Arg83 and Arg89 each contribute to the substrate site. Residues Asn96 and 119–121 each bind NAD(+); that span reads ITN. The substrate site is built by Asn121 and Arg152. His176 acts as the Proton acceptor in catalysis.

It belongs to the LDH/MDH superfamily. MDH type 3 family.

The catalysed reaction is (S)-malate + NAD(+) = oxaloacetate + NADH + H(+). Catalyzes the reversible oxidation of malate to oxaloacetate. The protein is Malate dehydrogenase 1 of Rhodopseudomonas palustris (strain BisB18).